The following is a 552-amino-acid chain: BAR/IMD domain-containing adapter protein 2 (552 aa).

Residues 1 to 250 (MSLSRSEEMH…VQLMQQVASN (250 aa)) enclose the IMD domain. Residues 132 to 153 (DALDKCQAELKKLRKKSQGSKN) adopt a coiled-coil conformation. Ser261 is subject to Phosphoserine. Residues 295–369 (STPIMNGVTG…TLPRSSSMAA (75 aa)) are disordered. Thr296 is subject to Phosphothreonine. Low complexity predominate over residues 320-334 (QPKSLSPPQSQSKLS). A phosphoserine mark is found at Ser323, Ser325, and Ser336. The residue at position 340 (Thr340) is a Phosphothreonine. Phosphoserine is present on Ser346. A compositionally biased stretch (polar residues) spans 348–367 (TPKNSYATTENKTLPRSSSM). At Thr360 the chain carries Phosphothreonine. Residues Ser366, Ser384, Ser395, and Ser454 each carry the phosphoserine modification. The region spanning 374–437 (NGRMRVKAIF…PFSYTRVLDS (64 aa)) is the SH3 domain. Residues 447–457 (LQQGKSSSTGN) are compositionally biased toward polar residues. Disordered stretches follow at residues 447-466 (LQQG…DLAI) and 525-552 (TNDR…LAGR).

In terms of assembly, homodimer. Interacts with CDC42 and RAC1 that have been activated by GTP binding. Interacts with ATN1, ADGRB1, EPS8, SHANK1, SHANK2, SHANK3, WASF1 and WASF2. Interacts with ENAH after recruitment of CDC42. Interacts with TIAM1 and DIAPH1. Interacts (via SH3 domain) with E.coli effector protein EspF(U) (via PXXP motifs). Interacts with E.coli intimin receptor Tir. In terms of processing, phosphorylated on tyrosine residues by INSR in response to insulin treatment. Isoform 1 and isoform 4 are expressed almost exclusively in brain. Isoform 4 is barely detectable in placenta, prostate and testis. A short isoform is ubiquitous, with the highest expression in liver, prostate, testis and placenta.

The protein localises to the cytoplasm. It is found in the membrane. It localises to the cell projection. The protein resides in the filopodium. Its subcellular location is the ruffle. The protein localises to the cytoskeleton. Its function is as follows. Adapter protein that links membrane-bound small G-proteins to cytoplasmic effector proteins. Necessary for CDC42-mediated reorganization of the actin cytoskeleton and for RAC1-mediated membrane ruffling. Involved in the regulation of the actin cytoskeleton by WASF family members and the Arp2/3 complex. Plays a role in neurite growth. Acts syngeristically with ENAH to promote filipodia formation. Plays a role in the reorganization of the actin cytoskeleton in response to bacterial infection. Participates in actin bundling when associated with EPS8, promoting filopodial protrusions. This Homo sapiens (Human) protein is BAR/IMD domain-containing adapter protein 2 (BAIAP2).